A 375-amino-acid chain; its full sequence is Tryptophan dimethylallyltransferase (375 aa).

L-tryptophan is bound by residues 83–84 (IL) and E92. Substrate contacts are provided by R103, K189, and Y191. L-tryptophan-binding residues include Y193 and R246. 5 residues coordinate substrate: R259, K261, Y263, Q345, and Y347.

The protein belongs to the tryptophan dimethylallyltransferase family. In terms of assembly, homodimer.

It carries out the reaction L-tryptophan + dimethylallyl diphosphate = 4-(3-methylbut-2-enyl)-L-tryptophan + diphosphate. Its pathway is alkaloid biosynthesis; ergot alkaloid biosynthesis. Functionally, tryptophan dimethylallyltransferase; part of the gene cluster that mediates the biosynthesis of fungal ergot alkaloid. DmaW catalyzes the first step of ergot alkaloid biosynthesis by condensing dimethylallyl diphosphate (DMAP) and tryptophan to form 4-dimethylallyl-L-tryptophan. The second step is catalyzed by the methyltransferase easF that methylates 4-dimethylallyl-L-tryptophan in the presence of S-adenosyl-L-methionine, resulting in the formation of 4-dimethylallyl-L-abrine. The catalase easC and the FAD-dependent oxidoreductase easE then transform 4-dimethylallyl-L-abrine to chanoclavine-I which is further oxidized by easD in the presence of NAD(+), resulting in the formation of chanoclavine-I aldehyde. Chanoclavine-I aldehyde is the precursor of ergoamides and ergopeptines in Clavicipitaceae, and clavine-type alcaloids such as fumiclavine in Trichocomaceae. However, the metabolites downstream of chanoclavine-I aldehyde in Arthrodermataceae have not been identified yet. In Trichophyton verrucosum (strain HKI 0517), this protein is Tryptophan dimethylallyltransferase.